Reading from the N-terminus, the 305-residue chain is RxLR effector protein 17 (305 aa).

Positions 1–24 (MQSILWFALIASVVFLVLVDLASG) are cleaved as a signal peptide. Residues 45-60 (RLLRAAHLDRKLSEER) carry the RxLR-dEER motif. Asn-207 and Asn-227 each carry an N-linked (GlcNAc...) asparagine glycan. Residues 247-269 (LHLKWAVEAKSPKDVVERILKDL) are w motif.

Belongs to the RxLR effector family. Interacts with host A.thaliana At1G14340.

The protein resides in the secreted. It is found in the host cell membrane. Secreted effector that confers enhanced plant susceptibility during both compatible and incompatible interactions between the pathogen and its host. Promotes the sexual reproduction of the pathogen in the plant host. The polypeptide is RxLR effector protein 17 (Hyaloperonospora arabidopsidis (strain Emoy2) (Downy mildew agent)).